The sequence spans 237 residues: Cysteine-rich venom protein ENH2 (237 aa).

An N-terminal signal peptide occupies residues 1 to 18 (MIVFILLSLAAVLQQFVA). The region spanning 37–165 (VDMHNSFRRS…PYNYFYVCQY (129 aa)) is the SCP domain. 7 cysteine pairs are disulfide-bonded: Cys74–Cys152, Cys91–Cys166, Cys147–Cys163, Cys185–Cys192, Cys188–Cys197, Cys210–Cys228, and Cys219–Cys232. In terms of domain architecture, ShKT spans 201–237 (CPITNTFTNCDSLLQQNSCEDSYIKTNCGASCFGQDK).

Belongs to the CRISP family. Expressed by the venom gland.

The protein resides in the secreted. In terms of biological role, blocks contraction of smooth muscle elicited by high potassium-induced depolarization, but does not block caffeine-stimulated contraction. May target voltage-gated calcium channels on smooth muscle. The polypeptide is Cysteine-rich venom protein ENH2 (Pseudoferania polylepis (Macleay's water snake)).